The sequence spans 478 residues: Ribulose bisphosphate carboxylase large chain (478 aa).

Residues 1 to 2 (MS) constitute a propeptide that is removed on maturation. Residue P3 is modified to N-acetylproline. Position 14 is an N6,N6,N6-trimethyllysine (K14). N123 and T173 together coordinate substrate. K175 (proton acceptor) is an active-site residue. K177 serves as a coordination point for substrate. K201, D203, and E204 together coordinate Mg(2+). Position 201 is an N6-carboxylysine (K201). The Proton acceptor role is filled by H294. The substrate site is built by R295, H327, and S379.

This sequence belongs to the RuBisCO large chain family. Type I subfamily. Heterohexadecamer of 8 large chains and 8 small chains; disulfide-linked. The disulfide link is formed within the large subunit homodimers. Mg(2+) serves as cofactor. The disulfide bond which can form in the large chain dimeric partners within the hexadecamer appears to be associated with oxidative stress and protein turnover.

It is found in the plastid. The protein resides in the chloroplast. It catalyses the reaction 2 (2R)-3-phosphoglycerate + 2 H(+) = D-ribulose 1,5-bisphosphate + CO2 + H2O. The enzyme catalyses D-ribulose 1,5-bisphosphate + O2 = 2-phosphoglycolate + (2R)-3-phosphoglycerate + 2 H(+). In terms of biological role, ruBisCO catalyzes two reactions: the carboxylation of D-ribulose 1,5-bisphosphate, the primary event in carbon dioxide fixation, as well as the oxidative fragmentation of the pentose substrate in the photorespiration process. Both reactions occur simultaneously and in competition at the same active site. The protein is Ribulose bisphosphate carboxylase large chain of Neurachne tenuifolia.